The chain runs to 300 residues: Cation-efflux pump FieF (300 aa).

Helical transmembrane passes span 11–31, 40–60, 81–101, and 114–134; these read LAAV…VFAW, LASL…LLVV, LAAL…ILTG, and PEVG…LVSF. Zn(2+) is bound by residues D45 and D49. Zn(2+) is bound by residues H153 and D157. The next 2 helical transmembrane spans lie at 156–176 and 182–202; these read SDLL…KGIT and FALG…YDAV.

It belongs to the cation diffusion facilitator (CDF) transporter (TC 2.A.4) family. FieF subfamily. As to quaternary structure, homodimer.

The protein resides in the cell inner membrane. It catalyses the reaction Zn(2+)(in) + H(+)(out) = Zn(2+)(out) + H(+)(in). It carries out the reaction Cd(2+)(in) + H(+)(out) = Cd(2+)(out) + H(+)(in). The catalysed reaction is Fe(2+)(in) + H(+)(out) = Fe(2+)(out) + H(+)(in). Functionally, divalent metal cation transporter which exports Zn(2+), Cd(2+) and possibly Fe(2+). May be involved in zinc and iron detoxification by efflux. The polypeptide is Cation-efflux pump FieF (Pectobacterium carotovorum subsp. carotovorum (strain PC1)).